The chain runs to 577 residues: Arginine--tRNA ligase (577 aa).

The 'HIGH' region motif lies at 122-132; sequence PNVAKEMHVGH.

It belongs to the class-I aminoacyl-tRNA synthetase family. In terms of assembly, monomer.

The protein localises to the cytoplasm. It carries out the reaction tRNA(Arg) + L-arginine + ATP = L-arginyl-tRNA(Arg) + AMP + diphosphate. This is Arginine--tRNA ligase from Escherichia coli (strain K12 / MC4100 / BW2952).